A 174-amino-acid polypeptide reads, in one-letter code: Shikimate kinase 2 (174 aa).

Position 12–17 (12–17) interacts with ATP; it reads GAGKTT. The Mg(2+) site is built by Thr-16 and Asp-32. Substrate contacts are provided by Asp-34, Arg-58, and Gly-79. Positions 112 to 126 are LID domain; the sequence is AEDPEEAQRPSLTGK. An ATP-binding site is contributed by Arg-120. A substrate-binding site is contributed by Arg-139. Residue Gln-155 participates in ATP binding.

Belongs to the shikimate kinase family. AroL subfamily. As to quaternary structure, monomer. It depends on Mg(2+) as a cofactor.

It localises to the cytoplasm. The catalysed reaction is shikimate + ATP = 3-phosphoshikimate + ADP + H(+). It participates in metabolic intermediate biosynthesis; chorismate biosynthesis; chorismate from D-erythrose 4-phosphate and phosphoenolpyruvate: step 5/7. Its function is as follows. Catalyzes the specific phosphorylation of the 3-hydroxyl group of shikimic acid using ATP as a cosubstrate. The sequence is that of Shikimate kinase 2 from Yersinia pestis bv. Antiqua (strain Antiqua).